Consider the following 340-residue polypeptide: Putative inactive cytochrome P450 family member 4Z2 (340 aa).

The Cytoplasmic portion of the chain corresponds to M1 to L9. The helical; Signal-anchor for type II membrane protein transmembrane segment at M10 to I30 threads the bilayer. At R31 to C340 the chain is on the lumenal side.

This sequence belongs to the cytochrome P450 family. Heme is required as a cofactor. Detected at low levels in mammary gland and mammary carcinoma.

The protein resides in the membrane. This is Putative inactive cytochrome P450 family member 4Z2 (CYP4Z2P) from Homo sapiens (Human).